The primary structure comprises 235 residues: Protein fmp52-1, mitochondrial (235 aa).

The N-terminal 36 residues, 1-36 (MANTALIGCTGMVGSFILNNLLAHPSVARVDTISRR), are a transit peptide targeting the mitochondrion.

This sequence belongs to the FMP52 family.

It is found in the mitochondrion outer membrane. In Aspergillus oryzae (strain ATCC 42149 / RIB 40) (Yellow koji mold), this protein is Protein fmp52-1, mitochondrial (fmp521).